An 848-amino-acid polypeptide reads, in one-letter code: Adenylate cyclase (848 aa).

The segment at 1–535 is catalytic; it reads MYLYIETLKQ…DVSHHFPLRL (535 aa). The interval 541–848 is regulatory; the sequence is KALYSPCEIR…DAPLLQQYFS (308 aa). A Phosphohistidine; by CRR modification is found at H609.

It belongs to the adenylyl cyclase class-1 family.

It is found in the cytoplasm. The catalysed reaction is ATP = 3',5'-cyclic AMP + diphosphate. The polypeptide is Adenylate cyclase (cyaA) (Escherichia coli O6:H1 (strain CFT073 / ATCC 700928 / UPEC)).